A 345-amino-acid polypeptide reads, in one-letter code: Putative F-box protein At3g17265 (345 aa).

The F-box domain maps to 1 to 46 (MMFAYLPPDLESEILSRVPATFLKELQTTCKRWYALFRDPIFVKKN).

The sequence is that of Putative F-box protein At3g17265 from Arabidopsis thaliana (Mouse-ear cress).